Reading from the N-terminus, the 290-residue chain is Sodium/potassium-transporting ATPase subunit beta-2 (290 aa).

The Cytoplasmic portion of the chain corresponds to 1–39 (MVIQKEKKSCGQVVEEWKEFVWNPRTHQFMGRTGTSWAF). Residues 40–67 (ILLFYLVFYGFLTAMFTLTMWVMLQTVS) form a helical; Signal-anchor for type II membrane protein membrane-spanning segment. The Extracellular portion of the chain corresponds to 68 to 290 (EHTPKYQDRL…VAFKLRINKT (223 aa)). 2 N-linked (GlcNAc...) asparagine glycosylation sites follow: Asn96 and Asn118. Cys129 and Cys150 are disulfide-bonded. Asn153 and Asn159 each carry an N-linked (GlcNAc...) asparagine glycan. A disulfide bridge links Cys160 with Cys177. N-linked (GlcNAc...) asparagine glycosylation is found at Asn193, Asn197, and Asn238. Residues 193–290 (NQSMNVTCAG…VAFKLRINKT (98 aa)) form an immunoglobulin-like region. Cys200 and Cys261 are oxidised to a cystine.

Belongs to the X(+)/potassium ATPases subunit beta family. The sodium/potassium-transporting ATPase is composed of a catalytic alpha subunit, an auxiliary non-catalytic beta subunit and an additional regulatory subunit. Interacts with BSG.

It is found in the cell membrane. In terms of biological role, this is the non-catalytic component of the active enzyme, which catalyzes the hydrolysis of ATP coupled with the exchange of Na(+) and K(+) ions across the plasma membrane. The exact function of the beta-2 subunit is not known. Mediates cell adhesion of neurons and astrocytes, and promotes neurite outgrowth. The polypeptide is Sodium/potassium-transporting ATPase subunit beta-2 (ATP1B2) (Oryctolagus cuniculus (Rabbit)).